We begin with the raw amino-acid sequence, 298 residues long: 5'-AMP-activated protein kinase subunit beta (298 aa).

The interval 1-98 (MGNVQSQEGE…KTHQPYSGPC (98 aa)) is disordered. A compositionally biased stretch (polar residues) spans 19–30 (QDATTTPDNANN). Over residues 48–59 (LNQEGEMSDDNQ) the composition is skewed to acidic residues. Polar residues predominate over residues 60 to 77 (QEGGNNRTSQNGTSGSSG). Over residues 78-91 (HTKRRSQTSGKKTH) the composition is skewed to basic residues. 250–252 (DQS) serves as a coordination point for ADP.

Belongs to the 5'-AMP-activated protein kinase beta subunit family. As to quaternary structure, AMPK is a heterotrimer of an alpha catalytic subunit (ssp2), a beta (amk2) and a gamma non-catalytic subunits (cbs2). The beta subunit serves as a bridge between the catalytic and the regulatory subunit.

The protein localises to the cytoplasm. Functionally, beta subunit of AMP-activated protein kinase (AMPK), which is required for transcriptional, metabolic, and developmental adaptations in response to glucose limitation. Has a structural role, mediating heterotrimer formation, and a regulatory role, defining carbon source-regulated subcellular location and substrate specificity of the AMPK kinase complex. The polypeptide is 5'-AMP-activated protein kinase subunit beta (amk2) (Schizosaccharomyces pombe (strain 972 / ATCC 24843) (Fission yeast)).